Here is a 680-residue protein sequence, read N- to C-terminus: Harmonin-binding protein USHBP1 (680 aa).

Residues 1 to 15 (MSARATRPRSRRGRH) show a composition bias toward basic residues. Disordered regions lie at residues 1–51 (MSAR…YLGP) and 134–161 (KSVE…PGQQ). Residues 179–218 (NREDELACTQASLQDAQAEKETLQRQVQELEDSLMQMEAS) adopt a coiled-coil conformation. Disordered stretches follow at residues 220–247 (PTPI…VPQD) and 384–405 (TMEV…PTPE). Coiled-coil stretches lie at residues 363 to 386 (TKGD…ATME) and 467 to 506 (QIQQ…LRAQ). The interval 524–549 (FAGDGSSGGSSEDPSSEEEAGEDRQQ) is disordered. Residues 573–662 (QELSASLARA…QAEELAVLTA (90 aa)) adopt a coiled-coil conformation.

It belongs to the MCC family. Interacts via its C-terminus with the first PDZ domain of USH1C.

The polypeptide is Harmonin-binding protein USHBP1 (Mus musculus (Mouse)).